Here is a 390-residue protein sequence, read N- to C-terminus: 1-deoxy-D-xylulose 5-phosphate reductoisomerase (390 aa).

Residues threonine 10, glycine 11, serine 12, isoleucine 13, glycine 36, asparagine 38, and asparagine 124 each contribute to the NADPH site. Lysine 125 is a binding site for 1-deoxy-D-xylulose 5-phosphate. An NADPH-binding site is contributed by glutamate 126. Aspartate 150 contacts Mn(2+). 4 residues coordinate 1-deoxy-D-xylulose 5-phosphate: serine 151, glutamate 152, serine 176, and histidine 199. Position 152 (glutamate 152) interacts with Mn(2+). Glycine 205 is a binding site for NADPH. Positions 212, 217, 218, and 221 each coordinate 1-deoxy-D-xylulose 5-phosphate. Glutamate 221 lines the Mn(2+) pocket.

This sequence belongs to the DXR family. Requires Mg(2+) as cofactor. The cofactor is Mn(2+).

It carries out the reaction 2-C-methyl-D-erythritol 4-phosphate + NADP(+) = 1-deoxy-D-xylulose 5-phosphate + NADPH + H(+). Its pathway is isoprenoid biosynthesis; isopentenyl diphosphate biosynthesis via DXP pathway; isopentenyl diphosphate from 1-deoxy-D-xylulose 5-phosphate: step 1/6. Catalyzes the NADPH-dependent rearrangement and reduction of 1-deoxy-D-xylulose-5-phosphate (DXP) to 2-C-methyl-D-erythritol 4-phosphate (MEP). In Microcystis aeruginosa (strain NIES-843 / IAM M-2473), this protein is 1-deoxy-D-xylulose 5-phosphate reductoisomerase.